The following is a 228-amino-acid chain: Phosphatidylglycerophosphate phosphatase PTPMT2 (228 aa).

The segment covering 1–10 (MTDETEEDDT) has biased composition (acidic residues). The segment at 1–30 (MTDETEEDDTTQQRSSRNDGVSKNKGKGFK) is disordered. The substrate site is built by Y48 and D126. The Tyrosine-protein phosphatase domain maps to 66-213 (WWDQIDEYLL…VEEFSRLQSP (148 aa)). C157 serves as the catalytic Phosphocysteine intermediate. A Glucan phosphatase signature motif CXAGXGR motif is present at residues 157–163 (CKAGRGR). Position 158 to 163 (158 to 163 (KAGRGR)) interacts with substrate.

The protein belongs to the protein-tyrosine phosphatase family. Non-receptor class dual specificity subfamily. Expressed in roots, leaves, stems and flowers. In terms of tissue distribution, expressed at low levels in stems and flowers.

The catalysed reaction is O-phospho-L-seryl-[protein] + H2O = L-seryl-[protein] + phosphate. It carries out the reaction O-phospho-L-threonyl-[protein] + H2O = L-threonyl-[protein] + phosphate. The enzyme catalyses O-phospho-L-tyrosyl-[protein] + H2O = L-tyrosyl-[protein] + phosphate. It catalyses the reaction a 1,2-diacyl-sn-glycero-3-phospho-(1'-sn-glycero-3'-phosphate) + H2O = a 1,2-diacyl-sn-glycero-3-phospho-(1'-sn-glycerol) + phosphate. Its pathway is phospholipid metabolism; phosphatidylglycerol biosynthesis; phosphatidylglycerol from CDP-diacylglycerol: step 2/2. Exhibits phosphatidylglycerophosphate phosphatase activity. Involved in root growth and columella cells organization. May possess protein phosphatase activity. This is Phosphatidylglycerophosphate phosphatase PTPMT2 from Arabidopsis thaliana (Mouse-ear cress).